The chain runs to 489 residues: Siroheme synthase (489 aa).

Positions 1 to 203 are precorrin-2 dehydrogenase /sirohydrochlorin ferrochelatase; the sequence is MDFFPVFMRL…GREDAARETL (203 aa). NAD(+) is bound by residues 22–23 and 43–44; these read PV and PA. The interval 218–489 is uroporphyrinogen-III C-methyltransferase; the sequence is GEVFLVGAGP…ARSSTEGAEA (272 aa). Pro-227 serves as a coordination point for S-adenosyl-L-methionine. The active-site Proton acceptor is Asp-250. The active-site Proton donor is the Lys-272. S-adenosyl-L-methionine is bound by residues 303-305, Ile-308, 333-334, Met-385, and Gly-414; these read GGD and TA.

The protein in the N-terminal section; belongs to the precorrin-2 dehydrogenase / sirohydrochlorin ferrochelatase family. It in the C-terminal section; belongs to the precorrin methyltransferase family.

It carries out the reaction uroporphyrinogen III + 2 S-adenosyl-L-methionine = precorrin-2 + 2 S-adenosyl-L-homocysteine + H(+). The enzyme catalyses precorrin-2 + NAD(+) = sirohydrochlorin + NADH + 2 H(+). It catalyses the reaction siroheme + 2 H(+) = sirohydrochlorin + Fe(2+). It functions in the pathway cofactor biosynthesis; adenosylcobalamin biosynthesis; precorrin-2 from uroporphyrinogen III: step 1/1. Its pathway is cofactor biosynthesis; adenosylcobalamin biosynthesis; sirohydrochlorin from precorrin-2: step 1/1. The protein operates within porphyrin-containing compound metabolism; siroheme biosynthesis; precorrin-2 from uroporphyrinogen III: step 1/1. It participates in porphyrin-containing compound metabolism; siroheme biosynthesis; siroheme from sirohydrochlorin: step 1/1. It functions in the pathway porphyrin-containing compound metabolism; siroheme biosynthesis; sirohydrochlorin from precorrin-2: step 1/1. Multifunctional enzyme that catalyzes the SAM-dependent methylations of uroporphyrinogen III at position C-2 and C-7 to form precorrin-2 via precorrin-1. Then it catalyzes the NAD-dependent ring dehydrogenation of precorrin-2 to yield sirohydrochlorin. Finally, it catalyzes the ferrochelation of sirohydrochlorin to yield siroheme. This is Siroheme synthase from Thioalkalivibrio sulfidiphilus (strain HL-EbGR7).